Here is a 257-residue protein sequence, read N- to C-terminus: Short chain dehydrogenase prhI (257 aa).

A helical transmembrane segment spans residues 7–29 (HVVIITGSSSGIGLAASTLALAS). Residue isoleucine 11 participates in NADP(+) binding. The N-linked (GlcNAc...) asparagine glycan is linked to asparagine 50. Aspartate 57 provides a ligand contact to NADP(+). 2 N-linked (GlcNAc...) asparagine glycosylation sites follow: asparagine 92 and asparagine 110. Positions 119, 151, 155, and 184 each coordinate NADP(+). The active-site Proton acceptor is the tyrosine 151. Lysine 155 (lowers pKa of active site Tyr) is an active-site residue.

This sequence belongs to the short-chain dehydrogenases/reductases (SDR) family.

Its subcellular location is the membrane. It carries out the reaction protoaustinoid A + A = protoaustinoid B + AH2. Its pathway is secondary metabolite biosynthesis; terpenoid biosynthesis. Functionally, short chain dehydrogenase; part of the gene cluster that mediates the biosynthesis of paraherquonin, a meroterpenoid with a unique, highly congested hexacyclic molecular architecture. The first step of the pathway is the synthesis of 3,5-dimethylorsellinic acid (DMOA) by the polyketide synthase prhL. Synthesis of DMOA is followed by farnesylation by the prenyltransferase prhE, methylesterification by the methyl-transferase prhM, epoxidation of the prenyl chain by the flavin-dependent monooxygenase prhF, and cyclization of the farnesyl moiety by the terpene cyclase prhH, to yield the tetracyclic intermediate, protoaustinoid A. The short chain dehydrogenase prhI then oxidizes the C-3 alcohol group of the terpene cyclase product to transform protoaustinoid A into protoaustinoid B. The FAD-binding monooxygenase prhJ catalyzes the oxidation of protoaustinoid B into preaustinoid A which is further oxidized into preaustinoid A1 by FAD-binding monooxygenase phrK. Finally, prhA leads to berkeleydione via the berkeleyone B intermediate. PrhA is a multifunctional dioxygenase that first desaturates at C5-C6 to form berkeleyone B, followed by rearrangement of the A/B-ring to form the cycloheptadiene moiety in berkeleydione. Berkeleydione serves as the key intermediate for the biosynthesis of paraherquonin as well as many other meroterpenoids. The cytochrome P450 monooxygenases prhB, prhD, and prhN, as well as the isomerase prhC, are probably involved in the late stage of paraherquonin biosynthesis, after the production of berkeleydione. Especially prhC might be a multifunctional enzyme that catalyzes the D-ring expansion via intramolecular methoxy rearrangement, as well as the hydrolysis of the expanded D-ring. This is Short chain dehydrogenase prhI from Penicillium brasilianum.